Consider the following 65-residue polypeptide: DNA-directed RNA polymerase subunit Rpo10 (65 aa).

Residues Cys7, Cys10, Cys44, and Cys45 each coordinate Zn(2+).

This sequence belongs to the archaeal Rpo10/eukaryotic RPB10 RNA polymerase subunit family. As to quaternary structure, part of the RNA polymerase complex. It depends on Zn(2+) as a cofactor.

The protein localises to the cytoplasm. It catalyses the reaction RNA(n) + a ribonucleoside 5'-triphosphate = RNA(n+1) + diphosphate. Its function is as follows. DNA-dependent RNA polymerase (RNAP) catalyzes the transcription of DNA into RNA using the four ribonucleoside triphosphates as substrates. This is DNA-directed RNA polymerase subunit Rpo10 from Nanoarchaeum equitans (strain Kin4-M).